A 170-amino-acid chain; its full sequence is Neurotensin/neuromedin N (170 aa).

Positions 1–23 (MMAGMKIQLVCMILLAFSSWSLC) are cleaved as a signal peptide.

The protein belongs to the neurotensin family. Interacts with NTSR1. Interacts with SORT1. Interacts with SORL1. Neurotensin is cleaved and degraded by Angiotensin-converting enzyme (ACE) and neprilysin (MME).

Its subcellular location is the secreted. The protein resides in the cytoplasmic vesicle. It is found in the secretory vesicle. In terms of biological role, neurotensin may play an endocrine or paracrine role in the regulation of fat metabolism. It causes contraction of smooth muscle. This chain is Neurotensin/neuromedin N (NTS), found in Canis lupus familiaris (Dog).